Consider the following 156-residue polypeptide: Ribosome maturation factor RimP (156 aa).

This sequence belongs to the RimP family.

The protein resides in the cytoplasm. In terms of biological role, required for maturation of 30S ribosomal subunits. The chain is Ribosome maturation factor RimP from Dictyoglomus thermophilum (strain ATCC 35947 / DSM 3960 / H-6-12).